The following is a 490-amino-acid chain: MSGGGPSGGGPGGSGRARTSSFAEPGGGGGGGGGGPGGSASGPGGTGGGKASVGAMGGGVGASSSGGGPSGSGGGGSGGPGAGTSFPPPGVKLGRDSGKVTTVVATVGQGPERSQEVAYTDIKVIGNGSFGVVYQARLAETRELVAIKKVLQDKRFKNRELQIMRKLDHCNIVRLRYFFYSSGEKKDELYLNLVLEYVPETVYRVARHFTKAKLITPIIYIKVYMYQLFRSLAYIHSQGVCHRDIKPQNLLVDPDTAVLKLCDFGSAKQLVRGEPNVSYICSRYYRAPELIFGATDYTSSIDVWSAGCVLAELLLGQPIFPGDSGVDQLVEIIKVLGTPTREQIREMNPNYTEFKFPQIKAHPWTKVFKSSKTPPEAIALCSSLLEYTPSSRLSPLEACAHSFFDELRRLGAQLPNDRPLPPLFNFSPGELSIQPSLNAILIPPHLRSPAGPASPLTTSYNPSSQALTEAQTGQDWQPSDATTATLASSS.

Residues 1 to 15 show a composition bias toward gly residues; it reads MSGGGPSGGGPGGSG. Residues 1 to 97 form a disordered region; it reads MSGGGPSGGG…PPGVKLGRDS (97 aa). Residue serine 2 is modified to N-acetylserine. A Phosphoserine modification is found at serine 2. Serine 21 is subject to Phosphoserine; by PKB/AKT1. The segment covering 25-82 has biased composition (gly residues); sequence PGGGGGGGGGGPGGSASGPGGTGGGKASVGAMGGGVGASSSGGGPSGSGGGGSGGPGA. Phosphoserine occurs at positions 72, 77, and 97. The region spanning 119 to 404 is the Protein kinase domain; sequence YTDIKVIGNG…PLEACAHSFF (286 aa). ATP is bound by residues 125-133 and lysine 148; that span reads IGNGSFGVV. Aspartate 244 serves as the catalytic Proton acceptor. Tyrosine 279 is modified (phosphotyrosine). Residues 451–490 form a disordered region; sequence GPASPLTTSYNPSSQALTEAQTGQDWQPSDATTATLASSS. Over residues 455-480 the composition is skewed to polar residues; the sequence is PLTTSYNPSSQALTEAQTGQDWQPSD. Residues 481–490 are compositionally biased toward low complexity; the sequence is ATTATLASSS.

This sequence belongs to the protein kinase superfamily. CMGC Ser/Thr protein kinase family. GSK-3 subfamily. In terms of assembly, monomer. Interacts with AXIN1 and CTNNB1/beta-catenin. Interacts with ARRB2. Interacts with CTNND2. Interacts with LMBR1L. Interacts with DDX3X. Interacts with TNFRSF10B. Post-translationally, phosphorylated by AKT1 at Ser-21: upon insulin-mediated signaling, the activated PKB/AKT1 protein kinase phosphorylates and deactivates GSK3A, resulting in the dephosphorylation and activation of GYS1. Activated by phosphorylation at Tyr-279.

The catalysed reaction is L-seryl-[tau protein] + ATP = O-phospho-L-seryl-[tau protein] + ADP + H(+). It carries out the reaction L-threonyl-[tau protein] + ATP = O-phospho-L-threonyl-[tau protein] + ADP + H(+). It catalyses the reaction L-seryl-[protein] + ATP = O-phospho-L-seryl-[protein] + ADP + H(+). The enzyme catalyses L-threonyl-[protein] + ATP = O-phospho-L-threonyl-[protein] + ADP + H(+). With respect to regulation, activated by phosphorylation at Tyr-279. In response to insulin, inhibited by phosphorylation at Ser-21 by PKB/AKT1; phosphorylation at this site causes a conformational change, preventing access of substrates to the active site. Inhibited by lithium. Its function is as follows. Constitutively active protein kinase that acts as a negative regulator in the hormonal control of glucose homeostasis, Wnt signaling and regulation of transcription factors and microtubules, by phosphorylating and inactivating glycogen synthase (GYS1 or GYS2), CTNNB1/beta-catenin, APC and AXIN1. Requires primed phosphorylation of the majority of its substrates. Contributes to insulin regulation of glycogen synthesis by phosphorylating and inhibiting GYS1 activity and hence glycogen synthesis. Regulates glycogen metabolism in liver, but not in muscle. May also mediate the development of insulin resistance by regulating activation of transcription factors. In Wnt signaling, regulates the level and transcriptional activity of nuclear CTNNB1/beta-catenin. Facilitates amyloid precursor protein (APP) processing and the generation of APP-derived amyloid plaques found in Alzheimer disease. May be involved in the regulation of replication in pancreatic beta-cells. Is necessary for the establishment of neuronal polarity and axon outgrowth. Through phosphorylation of the anti-apoptotic protein MCL1, may control cell apoptosis in response to growth factors deprivation. Acts as a regulator of autophagy by mediating phosphorylation of KAT5/TIP60 under starvation conditions, activating KAT5/TIP60 acetyltransferase activity and promoting acetylation of key autophagy regulators, such as ULK1 and RUBCNL/Pacer. Negatively regulates extrinsic apoptotic signaling pathway via death domain receptors. Promotes the formation of an anti-apoptotic complex, made of DDX3X, BRIC2 and GSK3B, at death receptors, including TNFRSF10B. The anti-apoptotic function is most effective with weak apoptotic signals and can be overcome by stronger stimulation. The sequence is that of Glycogen synthase kinase-3 alpha (Gsk3a) from Mus musculus (Mouse).